The chain runs to 272 residues: Shikimate dehydrogenase (NADP(+)) (272 aa).

Shikimate contacts are provided by residues 14–16 (SKS) and threonine 61. Lysine 65 (proton acceptor) is an active-site residue. Glutamate 77 is an NADP(+) binding site. Shikimate contacts are provided by asparagine 86 and aspartate 102. NADP(+)-binding positions include 126-130 (GAGGA), 149-154 (NRTVSR), and methionine 213. Residue tyrosine 215 coordinates shikimate. NADP(+) is bound at residue glycine 237.

The protein belongs to the shikimate dehydrogenase family. Homodimer.

It carries out the reaction shikimate + NADP(+) = 3-dehydroshikimate + NADPH + H(+). It functions in the pathway metabolic intermediate biosynthesis; chorismate biosynthesis; chorismate from D-erythrose 4-phosphate and phosphoenolpyruvate: step 4/7. Involved in the biosynthesis of the chorismate, which leads to the biosynthesis of aromatic amino acids. Catalyzes the reversible NADPH linked reduction of 3-dehydroshikimate (DHSA) to yield shikimate (SA). The chain is Shikimate dehydrogenase (NADP(+)) from Escherichia coli (strain K12 / MC4100 / BW2952).